Reading from the N-terminus, the 98-residue chain is NADH-ubiquinone oxidoreductase chain 4L (98 aa).

The next 3 membrane-spanning stretches (helical) occupy residues 1-21 (MTTM…GVFI), 29-49 (TLLC…LILL), and 59-79 (LPLI…ALLV).

This sequence belongs to the complex I subunit 4L family. As to quaternary structure, core subunit of respiratory chain NADH dehydrogenase (Complex I) which is composed of 45 different subunits.

It is found in the mitochondrion inner membrane. It catalyses the reaction a ubiquinone + NADH + 5 H(+)(in) = a ubiquinol + NAD(+) + 4 H(+)(out). Its function is as follows. Core subunit of the mitochondrial membrane respiratory chain NADH dehydrogenase (Complex I) which catalyzes electron transfer from NADH through the respiratory chain, using ubiquinone as an electron acceptor. Part of the enzyme membrane arm which is embedded in the lipid bilayer and involved in proton translocation. The chain is NADH-ubiquinone oxidoreductase chain 4L (MT-ND4L) from Ornithorhynchus anatinus (Duckbill platypus).